Consider the following 98-residue polypeptide: MKINQPAVAGTLESGDVMIRIAPLDTQDIDLQINSSVEKQFGDAIRTTILDVLARYNVRGVQLNVDDKGALDCILRARLEALLARASGIPALPWEDCQ.

Residue Ser14 is modified to O-(phosphoribosyl dephospho-coenzyme A)serine.

The protein belongs to the CitD family. In terms of assembly, oligomer with a subunit composition of (alpha,beta,gamma)6.

The protein resides in the cytoplasm. Functionally, covalent carrier of the coenzyme of citrate lyase. The polypeptide is Citrate lyase acyl carrier protein (Escherichia coli O127:H6 (strain E2348/69 / EPEC)).